Reading from the N-terminus, the 309-residue chain is CDK-activating kinase assembly factor MAT1 (309 aa).

Position 1 is an N-acetylmethionine (Met-1). The RING-type zinc-finger motif lies at 6–50 (CPRCKTTKYRNPSLKLMVNVCGHTLCESCVDLLFVRGAGNCPECG). The residue at position 51 (Thr-51) is a Phosphothreonine. Residues 142-161 (REQEELEEALEVERQEHEQR) enclose the UIM domain. The residue at position 279 (Ser-279) is a Phosphoserine.

Associates primarily with CDK7 and cyclin H to form the CAK complex. CAK can further associate with the core-TFIIH to form the TFIIH basal transcription factor.

Its subcellular location is the nucleus. Functionally, stabilizes the cyclin H-CDK7 complex to form a functional CDK-activating kinase (CAK) enzymatic complex. CAK activates the cyclin-associated kinases CDK1, CDK2, CDK4 and CDK6 by threonine phosphorylation. CAK complexed to the core-TFIIH basal transcription factor activates RNA polymerase II by serine phosphorylation of the repetitive C-terminal domain (CTD) of its large subunit (POLR2A), allowing its escape from the promoter and elongation of the transcripts. Involved in cell cycle control and in RNA transcription by RNA polymerase II. This chain is CDK-activating kinase assembly factor MAT1 (Mnat1), found in Mus musculus (Mouse).